The chain runs to 377 residues: Nitric oxide reductase FlRd-NAD(+) reductase (377 aa).

Belongs to the FAD-dependent oxidoreductase family. It depends on FAD as a cofactor.

It localises to the cytoplasm. It carries out the reaction 2 reduced [nitric oxide reductase rubredoxin domain] + NAD(+) + H(+) = 2 oxidized [nitric oxide reductase rubredoxin domain] + NADH. Its pathway is nitrogen metabolism; nitric oxide reduction. Its function is as follows. One of at least two accessory proteins for anaerobic nitric oxide (NO) reductase. Reduces the rubredoxin moiety of NO reductase. The chain is Nitric oxide reductase FlRd-NAD(+) reductase from Klebsiella pneumoniae subsp. pneumoniae (strain ATCC 700721 / MGH 78578).